We begin with the raw amino-acid sequence, 122 residues long: Large ribosomal subunit protein uL14 (122 aa).

Belongs to the universal ribosomal protein uL14 family. In terms of assembly, part of the 50S ribosomal subunit. Forms a cluster with proteins L3 and L19. In the 70S ribosome, L14 and L19 interact and together make contacts with the 16S rRNA in bridges B5 and B8.

Binds to 23S rRNA. Forms part of two intersubunit bridges in the 70S ribosome. This Lactobacillus gasseri (strain ATCC 33323 / DSM 20243 / BCRC 14619 / CIP 102991 / JCM 1131 / KCTC 3163 / NCIMB 11718 / NCTC 13722 / AM63) protein is Large ribosomal subunit protein uL14.